The sequence spans 271 residues: Oligodendrocyte transcription factor 1 (271 aa).

A disordered region spans residues 38-117 (YRQPPSSSSS…RKINSRERKR (80 aa)). Over residues 43–61 (SSSSSSTSSTSSTSSSSTT) the composition is skewed to low complexity. A bHLH domain is found at 105-164 (QLRRKINSRERKRMQDLNLAMDALREVILPYSAAHCQGAPGRKLSKIATLLLARNYILLL).

In terms of tissue distribution, expressed in the brain, in oligodendrocytes. Strongly expressed in oligodendrogliomas, while expression is weak to moderate in astrocytomas. Expression in glioblastomas is highly variable.

The protein resides in the nucleus. Its function is as follows. Promotes formation and maturation of oligodendrocytes, especially within the brain. Cooperates with OLIG2 to establish the pMN domain of the embryonic neural tube. The sequence is that of Oligodendrocyte transcription factor 1 (OLIG1) from Homo sapiens (Human).